The sequence spans 588 residues: DELLA protein GAI (588 aa).

Residues 1–15 are compositionally biased toward basic and acidic residues; the sequence is MKRDRDRDREREKRA. The disordered stretch occupies residues 1–38; it reads MKRDRDRDREREKRAFSNGAVSSGKSKIWEEDEEEKPD. The DELLA motif motif lies at 42–46; sequence DELLA. The tract at residues 152–177 is disordered; the sequence is GAVFNSDSNKRHRSTTSSFSTTSSSM. The segment covering 166–177 has biased composition (low complexity); that stretch reads TTSSFSTTSSSM. The GRAS domain maps to 190-574; sequence VDSQETGVRL…RPLIATSAWK (385 aa). Residues 197-251 form a leucine repeat I (LRI) region; sequence VRLVHTLMACAEAVQQENLTLADQLVRHIGILAVSQSGAMRKVATYFAEALARRI. Residues 269–334 form a VHIID region; the sequence is QMHFYETCPY…GGPPAFRLTG (66 aa). A VHIID motif is present at residues 300–304; that stretch reads VHVID. Residues 348-380 form a leucine repeat II (LRII) region; that stretch reads QVGWKLAQLAETIGVEFEFRGFVANSLADLDAT. Residues 392–495 are PFYRE; it reads VAINSVFELH…EVYLGRQICN (104 aa). The LXXLL motif motif lies at 400–404; the sequence is LHRLL. Positions 498–574 are SAW; the sequence is ACEGSDRVER…RPLIATSAWK (77 aa).

Belongs to the GRAS family. DELLA subfamily. Post-translationally, phosphorylated. In terms of processing, ubiquitinated. Upon GA application it is ubiquitinated, leading to its subsequent degradation. Expressed in both vegetative and reproductive tissues.

Its subcellular location is the nucleus. Probable transcriptional regulator that acts as a repressor of the gibberellin (GA) signaling pathway. Probably acts by participating in large multiprotein complexes that repress transcription of GA-inducible genes. Upon GA application, it is degraded by the proteasome, allowing the GA signaling pathway. Its degradation is not essential for germination. This chain is DELLA protein GAI (GAI), found in Solanum lycopersicum (Tomato).